Consider the following 166-residue polypeptide: 6,7-dimethyl-8-ribityllumazine synthase (166 aa).

Residues phenylalanine 22, 56 to 58 (SME), and 80 to 82 (AVI) contribute to the 5-amino-6-(D-ribitylamino)uracil site. Residue 85–86 (ET) coordinates (2S)-2-hydroxy-3-oxobutyl phosphate. Histidine 88 (proton donor) is an active-site residue. A 5-amino-6-(D-ribitylamino)uracil-binding site is contributed by phenylalanine 113. Arginine 127 lines the (2S)-2-hydroxy-3-oxobutyl phosphate pocket.

It belongs to the DMRL synthase family.

It catalyses the reaction (2S)-2-hydroxy-3-oxobutyl phosphate + 5-amino-6-(D-ribitylamino)uracil = 6,7-dimethyl-8-(1-D-ribityl)lumazine + phosphate + 2 H2O + H(+). Its pathway is cofactor biosynthesis; riboflavin biosynthesis; riboflavin from 2-hydroxy-3-oxobutyl phosphate and 5-amino-6-(D-ribitylamino)uracil: step 1/2. Functionally, catalyzes the formation of 6,7-dimethyl-8-ribityllumazine by condensation of 5-amino-6-(D-ribitylamino)uracil with 3,4-dihydroxy-2-butanone 4-phosphate. This is the penultimate step in the biosynthesis of riboflavin. The sequence is that of 6,7-dimethyl-8-ribityllumazine synthase from Thermotoga neapolitana (strain ATCC 49049 / DSM 4359 / NBRC 107923 / NS-E).